The primary structure comprises 121 residues: Basic phospholipase A2 F17 (121 aa).

Intrachain disulfides connect cysteine 25/cysteine 114, cysteine 27/cysteine 43, cysteine 42/cysteine 94, cysteine 48/cysteine 121, cysteine 49/cysteine 87, cysteine 56/cysteine 80, and cysteine 74/cysteine 85. 3 residues coordinate Ca(2+): tyrosine 26, glycine 28, and glycine 30. The active site involves histidine 46. Aspartate 47 contributes to the Ca(2+) binding site. The active site involves aspartate 88.

The protein belongs to the phospholipase A2 family. Group II subfamily. D49 sub-subfamily. When this protein is associated with crotapotin (F5 or F7), it forms the crotoxin protein. The cofactor is Ca(2+). Expressed by the venom gland.

It localises to the secreted. It carries out the reaction a 1,2-diacyl-sn-glycero-3-phosphocholine + H2O = a 1-acyl-sn-glycero-3-phosphocholine + a fatty acid + H(+). Its activity is regulated as follows. Activated by heparin. Inhibited by its chaperone crotapotin. Snake venom phospholipase A2 (PLA2) that has anticoagulant activity and inhibits bactericial growth of the Gram-negative bacteria Xanthomonas axonopodis pv. passiflorae (in monomeric form). PLA2 catalyzes the calcium-dependent hydrolysis of the 2-acyl groups in 3-sn-phosphoglycerides. The sequence is that of Basic phospholipase A2 F17 from Crotalus durissus terrificus (South American rattlesnake).